Reading from the N-terminus, the 155-residue chain is Protein FAM201A (155 aa).

Residues Q130 to T155 form a disordered region.

This Homo sapiens (Human) protein is Protein FAM201A (FAM201A).